The sequence spans 230 residues: Ribonuclease 3 (230 aa).

Residues 5 to 127 (HEHLARKLGI…ILGAVLRDQG (123 aa)) enclose the RNase III domain. Position 40 (Glu40) interacts with Mg(2+). Asp44 is an active-site residue. Mg(2+) contacts are provided by Asp113 and Glu116. Glu116 is a catalytic residue. Residues 154–224 (DPKTRLQELM…AENMLSRLSD (71 aa)) form the DRBM domain. A disordered region spans residues 202-230 (GEGSSRKKAEQQAAENMLSRLSDQSRFRV).

It belongs to the ribonuclease III family. Homodimer. It depends on Mg(2+) as a cofactor.

The protein localises to the cytoplasm. The enzyme catalyses Endonucleolytic cleavage to 5'-phosphomonoester.. Digests double-stranded RNA. Involved in the processing of primary rRNA transcript to yield the immediate precursors to the large and small rRNAs (23S and 16S). Processes some mRNAs, and tRNAs when they are encoded in the rRNA operon. Processes pre-crRNA and tracrRNA of type II CRISPR loci if present in the organism. This Methylococcus capsulatus (strain ATCC 33009 / NCIMB 11132 / Bath) protein is Ribonuclease 3.